A 308-amino-acid chain; its full sequence is Isochorismatase domain-containing protein 1 (308 aa).

It belongs to the isochorismatase family.

This Xenopus tropicalis (Western clawed frog) protein is Isochorismatase domain-containing protein 1 (isoc1).